The chain runs to 581 residues: Arginine--tRNA ligase (581 aa).

Residues 126 to 136 carry the 'HIGH' region motif; that stretch reads PNLAKEMHVGH.

Belongs to the class-I aminoacyl-tRNA synthetase family. Monomer.

The protein localises to the cytoplasm. The catalysed reaction is tRNA(Arg) + L-arginine + ATP = L-arginyl-tRNA(Arg) + AMP + diphosphate. In Shewanella amazonensis (strain ATCC BAA-1098 / SB2B), this protein is Arginine--tRNA ligase.